The sequence spans 340 residues: N-acetyl-gamma-glutamyl-phosphate reductase (340 aa).

The active site involves Cys-149.

It belongs to the NAGSA dehydrogenase family. Type 1 subfamily.

The protein resides in the cytoplasm. It carries out the reaction N-acetyl-L-glutamate 5-semialdehyde + phosphate + NADP(+) = N-acetyl-L-glutamyl 5-phosphate + NADPH + H(+). The protein operates within amino-acid biosynthesis; L-arginine biosynthesis; N(2)-acetyl-L-ornithine from L-glutamate: step 3/4. Catalyzes the NADPH-dependent reduction of N-acetyl-5-glutamyl phosphate to yield N-acetyl-L-glutamate 5-semialdehyde. This chain is N-acetyl-gamma-glutamyl-phosphate reductase, found in Vesicomyosocius okutanii subsp. Calyptogena okutanii (strain HA).